Consider the following 991-residue polypeptide: Phosphate metabolism protein 7 (991 aa).

The Extracellular segment spans residues 1 to 9 (MADSSSTSA). The helical transmembrane segment at 10–30 (FISTLIIYGLTAVVFVWLFLL) threads the bilayer. The Cytoplasmic segment spans residues 31–91 (LRPKNRRVYE…TSVDGYFLLR (61 aa)). A helical transmembrane segment spans residues 92–112 (YIGIVGSLSFVGCLLLLPILL). Over 113-138 (PVNATNGNNLQGFELLSFSNVTNKNR) the chain is Extracellular. N-linked (GlcNAc...) asparagine glycans are attached at residues asparagine 115 and asparagine 132. The helical transmembrane segment at 139–159 (FYAHVFLSWIFFGLFTYVIYK) threads the bilayer. Topologically, residues 160–388 (ELYYYVVFRH…ERHSRRAVAN (229 aa)) are cytoplasmic. A helical membrane pass occupies residues 389-409 (TIMVLLIIFWAFPVAVVGIIS). At 410-437 (NVNFLTDKVPFLRFINNMPTFLMGVITG) the chain is on the extracellular side. A helical transmembrane segment spans residues 438 to 458 (LLPTIALVVLMSLVPPFIVML). The Cytoplasmic portion of the chain corresponds to 459–471 (GKLSGCVTRQETD). Residues 472–492 (LYSQAWYYAFAVIQIFLVVTA) traverse the membrane as a helical segment. The Extracellular segment spans residues 493–523 (TSSASSTVDSIIDRPRSAMTLLANNLPKASN). Residues 524–544 (FYIMYFILKGLTGPTWTILQA) form a helical membrane-spanning segment. At 545–582 (VNLLLSKVLGRVLDSTPRQKWNRYNTLATPRMGIVYPG) the chain is on the cytoplasmic side. A helical membrane pass occupies residues 583–603 (IEILVCIYICYSIIAPILLFF). Serine 604 is a topological domain (extracellular). The helical transmembrane segment at 605–625 (TVMLTLLYVAYLYNLNYVFGF) threads the bilayer. The Cytoplasmic portion of the chain corresponds to 626–637 (SFDLKGRNYPRA). A helical membrane pass occupies residues 638–658 (LFQIFVGIYLSEVCLLGLFIM). The Extracellular portion of the chain corresponds to 659 to 661 (AKT). The chain crosses the membrane as a helical span at residues 662–682 (WGPLVLEVFWIVVTALAHIYM). The Cytoplasmic segment spans residues 683-991 (KRKFIPLFDA…PPDYEPEAKK (309 aa)). Residues 749–787 (KANLIPDNDGSSENGTPSNPFESGSERASLSGSNAESDS) are disordered. Residues 757-785 (DGSSENGTPSNPFESGSERASLSGSNAES) show a composition bias toward polar residues.

The protein belongs to the CSC1 (TC 1.A.17) family.

It is found in the cell membrane. In terms of biological role, acts as an osmosensitive calcium-permeable cation channel. This chain is Phosphate metabolism protein 7 (PHM7), found in Saccharomyces cerevisiae (strain ATCC 204508 / S288c) (Baker's yeast).